The primary structure comprises 146 residues: Late protein OPG112 (146 aa).

A helical transmembrane segment spans residues 10–31 (LAMTAFFGELNTLDIMALIMSI).

Belongs to the orthopoxvirus OPG112 family.

It is found in the host membrane. The protein resides in the host cytoplasm. In terms of biological role, contributes to the formation of crescents and immature virions (IV). Interacts with phosphatidylinositol-3-phosphate (PI3P) and phosphatidylinositol-4-phosphate (PI4P) lipids in order to form virion membranes. Mechanistically, mediates proper formation of OPG125-hexamers, and hence the honey comb lattice and spherical immature virus. The polypeptide is Late protein OPG112 (OPG112) (Cynomys gunnisoni (Gunnison's prairie dog)).